Here is a 342-residue protein sequence, read N- to C-terminus: L-threonine 3-dehydrogenase (342 aa).

Cysteine 38 contributes to the Zn(2+) binding site. Residues threonine 40 and histidine 43 each act as charge relay system in the active site. Zn(2+) is bound by residues histidine 63, glutamate 64, cysteine 93, cysteine 96, cysteine 99, and cysteine 107. NAD(+)-binding positions include isoleucine 175, aspartate 195, arginine 200, 262-264 (LGI), and 286-287 (IY).

Belongs to the zinc-containing alcohol dehydrogenase family. In terms of assembly, homotetramer. Zn(2+) serves as cofactor.

It localises to the cytoplasm. It catalyses the reaction L-threonine + NAD(+) = (2S)-2-amino-3-oxobutanoate + NADH + H(+). It participates in amino-acid degradation; L-threonine degradation via oxydo-reductase pathway; glycine from L-threonine: step 1/2. Functionally, catalyzes the NAD(+)-dependent oxidation of L-threonine to 2-amino-3-ketobutyrate. The polypeptide is L-threonine 3-dehydrogenase (Burkholderia multivorans (strain ATCC 17616 / 249)).